A 309-amino-acid chain; its full sequence is Homoserine kinase (309 aa).

91–101 (PIGSGLGSSAC) is a binding site for ATP.

This sequence belongs to the GHMP kinase family. Homoserine kinase subfamily.

The protein localises to the cytoplasm. It catalyses the reaction L-homoserine + ATP = O-phospho-L-homoserine + ADP + H(+). It participates in amino-acid biosynthesis; L-threonine biosynthesis; L-threonine from L-aspartate: step 4/5. Catalyzes the ATP-dependent phosphorylation of L-homoserine to L-homoserine phosphate. This is Homoserine kinase from Buchnera aphidicola subsp. Schizaphis graminum (strain Sg).